Reading from the N-terminus, the 134-residue chain is Protein YhfA (134 aa).

This is Protein YhfA (yhfA) from Escherichia coli O157:H7.